We begin with the raw amino-acid sequence, 447 residues long: Tubulin beta chain (447 aa).

Residues Gln-11, Glu-69, Ser-138, Gly-142, Thr-143, Gly-144, Asn-204, and Asn-226 each contribute to the GTP site. Mg(2+) is bound at residue Glu-69. The tract at residues 424–447 (QYQEASVSDAEEEYDEEAPLEGEE) is disordered. Residues 432 to 447 (DAEEEYDEEAPLEGEE) show a composition bias toward acidic residues.

Belongs to the tubulin family. Dimer of alpha and beta chains. A typical microtubule is a hollow water-filled tube with an outer diameter of 25 nm and an inner diameter of 15 nM. Alpha-beta heterodimers associate head-to-tail to form protofilaments running lengthwise along the microtubule wall with the beta-tubulin subunit facing the microtubule plus end conferring a structural polarity. Microtubules usually have 13 protofilaments but different protofilament numbers can be found in some organisms and specialized cells. Mg(2+) is required as a cofactor.

It is found in the cytoplasm. The protein localises to the cytoskeleton. Its function is as follows. Tubulin is the major constituent of microtubules, a cylinder consisting of laterally associated linear protofilaments composed of alpha- and beta-tubulin heterodimers. Microtubules grow by the addition of GTP-tubulin dimers to the microtubule end, where a stabilizing cap forms. Below the cap, tubulin dimers are in GDP-bound state, owing to GTPase activity of alpha-tubulin. This is Tubulin beta chain (TUB1) from Zymoseptoria tritici (Speckled leaf blotch fungus).